The primary structure comprises 308 residues: Protein doublecortin (308 aa).

A Doublecortin 1 domain is found at 21 to 104 (ARVILFRNGD…AEPLNTEVIP (84 aa)). The segment at 115-167 (EVSDQDDEPKPSKPFVSSVPPPPTPTPTSSSGTTTTSQPTLSASPSVSSAQSP) is disordered. Residues 141 to 167 (PTSSSGTTTTSQPTLSASPSVSSAQSP) show a composition bias toward low complexity. Residues 194–277 (KVIMCFRNGD…GETLNPLDFS (84 aa)) enclose the Doublecortin 2 domain. The tract at residues 282-308 (EHVKQKKLQEQQQQASEQQKPQEQEIF) is disordered. Over residues 291–300 (EQQQQASEQQ) the composition is skewed to low complexity.

Interacts with lis1.

It localises to the cytoplasm. Its subcellular location is the cytoskeleton. Its function is as follows. Has a cytoskeleton-independent function in chemotactic signaling during development. This is Protein doublecortin (dcx) from Dictyostelium discoideum (Social amoeba).